The primary structure comprises 102 residues: Co-chaperonin GroES (102 aa).

It belongs to the GroES chaperonin family. As to quaternary structure, heptamer of 7 subunits arranged in a ring. Interacts with the chaperonin GroEL.

It is found in the cytoplasm. Functionally, together with the chaperonin GroEL, plays an essential role in assisting protein folding. The GroEL-GroES system forms a nano-cage that allows encapsulation of the non-native substrate proteins and provides a physical environment optimized to promote and accelerate protein folding. GroES binds to the apical surface of the GroEL ring, thereby capping the opening of the GroEL channel. This Chlamydia pneumoniae (Chlamydophila pneumoniae) protein is Co-chaperonin GroES.